A 1178-amino-acid polypeptide reads, in one-letter code: Thrombospondin-2 (1178 aa).

The N-terminal stretch at 1 to 22 is a signal peptide; the sequence is MLQRSRLLWLAVFITLWVSSDA. Residues 25–221 enclose the Laminin G-like domain; sequence DAKEEENTFD…LQNIHLIFDT (197 aa). N-linked (GlcNAc...) asparagine glycosylation is found at N157, N244, N317, and N322. The VWFC domain occupies 324–381; sequence SVCWQDGRVFADSESWIVDSCTKCTCQDSKIVCHQITCPPVSCADPSFIEGECCPVCS. TSP type-1 domains lie at 387-437, 443-498, and 500-555; these read EEGW…KKCD, DGGW…APCP, and NGQW…RDCP. 27 cysteine pairs are disulfide-bonded: C399–C431, C403–C436, C414–C421, C455–C492, C459–C497, C470–C482, C512–C549, C516–C554, C527–C539, C559–C570, C564–C580, C583–C594, C600–C616, C607–C625, C628–C652, C658–C671, C665–C684, C686–C697, C713–C721, C726–C746, C762–C782, C785–C805, C821–C841, C844–C864, C882–C902, C918–C938, and C954–C1175. N463 carries N-linked (GlcNAc...) asparagine glycosylation. Residues 555-595 enclose the EGF-like 1 domain; it reads PIDGCLSNPCFPGAECNSYPDGSWSCGPCPAGFLGNGTVCE. The N-linked (GlcNAc...) asparagine glycan is linked to N590. Residues 654-698 form the EGF-like 2 domain; it reads PENPCKDKTHSCHKSAECIYLGHFSDPMYKCECRTGYAGDGRICG. 8 TSP type-3 repeats span residues 699 to 734, 735 to 770, 771 to 793, 794 to 829, 830 to 852, 853 to 890, 891 to 926, and 927 to 962; these read EDSD…NSGQ, EDFD…NPRQ, FDYD…NPAQ, IDTD…NTDQ, SDTD…NPDQ, TDAD…NANQ, ADHD…NPEQ, and EDSD…AISE. A glycan (N-linked (GlcNAc...) asparagine) is linked at N716. The interval 737 to 760 is disordered; sequence FDKDGKGDACDEDDDNDGVEDDKD. A compositionally biased stretch (acidic residues) spans 746–759; sequence CDEDDDNDGVEDDK. The tract at residues 852–941 is disordered; the sequence is QTDADNDLVG…DGRGDICKDD (90 aa). The segment covering 853–872 has biased composition (acidic residues); that stretch reads TDADNDLVGDQCDNNEDIDE. The segment covering 891–901 has biased composition (basic and acidic residues); it reads ADHDKDGKGDA. The span at 902-911 shows a compositional bias: acidic residues; that stretch reads CDPDDDNDGI. Composition is skewed to basic and acidic residues over residues 912 to 924 and 931 to 940; these read PDDR…RYNP and GDGRGDICKD. The Cell attachment site signature appears at 934 to 936; that stretch reads RGD. Positions 966–1178 constitute a TSP C-terminal domain; the sequence is RKFQMVPLDP…SDLKYECRDA (213 aa). A glycan (N-linked (GlcNAc...) asparagine) is linked at N1075.

The protein belongs to the thrombospondin family. As to quaternary structure, homotrimer; disulfide-linked. Can bind to fibrinogen, fibronectin, laminin and type V collagen.

Functionally, adhesive glycoprotein that mediates cell-to-cell and cell-to-matrix interactions. The polypeptide is Thrombospondin-2 (THBS2) (Gallus gallus (Chicken)).